A 522-amino-acid polypeptide reads, in one-letter code: Anti-sigma-I factor RsgI4 (522 aa).

Residues 1 to 51 (MNLGVVIKIKRKKAIIVTETGEFKAVNARNGMFLGQKILFDQQDVIENNRN) lie on the Cytoplasmic side of the membrane. The RsgI N-terminal anti-sigma domain maps to 2-49 (NLGVVIKIKRKKAIIVTETGEFKAVNARNGMFLGQKILFDQQDVIENN). Residues 52–72 (GIGLAYSAAIAGMVAVFVFMF) form a helical membrane-spanning segment. The Extracellular segment spans residues 73-522 (TYFGLHNFNG…SGILKWGREP (450 aa)). Over residues 311-361 (SAKTPERATTVPVNTPVKPTDAPTKSPATATATATRAPVKATATPAKTLKP) the composition is skewed to low complexity. The segment at 311-371 (SAKTPERATT…SDTPVKTPDG (61 aa)) is disordered. The CBM3 domain maps to 371–522 (GEQSVKVRFY…SGILKWGREP (152 aa)).

In terms of assembly, interacts (via RsgI N-terminal anti-sigma domain) with SigI4.

The protein resides in the cell membrane. Anti-sigma factor for SigI4. Negatively regulates SigI4 activity through direct interaction. Binding of the polysaccharide substrate to the extracellular C-terminal sensing domain of RsgI4 may induce a conformational change in its N-terminal cytoplasmic region, leading to the release and activation of SigI4. The protein is Anti-sigma-I factor RsgI4 of Acetivibrio thermocellus (strain ATCC 27405 / DSM 1237 / JCM 9322 / NBRC 103400 / NCIMB 10682 / NRRL B-4536 / VPI 7372) (Clostridium thermocellum).